The chain runs to 535 residues: Heparanase (535 aa).

The N-terminal stretch at 1–27 (MLRLLLLWLWGPLGALAQGAPAGTAPT) is a signal peptide. Residues 54 to 56 (DAS) and threonine 89 contribute to the heparan sulfate group site. Residues 102–149 (PTSEERSYWKSQVNHDICRSEPVSAAVLRKLQVEWPFQELLLLREQYQ) constitute a propeptide, linker peptide. Cysteine 119 and cysteine 171 form a disulfide bridge. 150-154 (KEFKN) contacts heparan sulfate group. N-linked (GlcNAc...) asparagine glycosylation is found at asparagine 192 and asparagine 209. Glutamate 217 serves as the catalytic Proton donor. Residues 262 to 272 (QPRGKTVKLLR), histidine 288, and arginine 295 contribute to the heparan sulfate group site. Residues 280 to 409 (EVIDSLTWHH…LLFKKLVGPR (130 aa)) are required for heterodimerization with the heparanase 8 kDa subunit. Glutamate 335 functions as the Nucleophile in the catalytic mechanism. Heparan sulfate group contacts are provided by residues 340-342 (YGG) and 381-383 (GNY). Cysteines 429 and 534 form a disulfide. Asparagine 451 is a glycosylation site (N-linked (GlcNAc...) asparagine). The segment at 519-535 (FSYGFFVIRNAKIAACI) is required for transferring proheparanase to the Golgi apparatus, secretion and subsequent enzyme activity and for enhancement of PKB/AKT1 phosphorylation.

The protein belongs to the glycosyl hydrolase 79 family. As to quaternary structure, heterodimer; heterodimer formation between the 8 kDa and the 50 kDa subunits is required for enzyme activity. Interacts with TF; the interaction, inhibited by heparin, enhances the generation of activated factor X and activates coagulation. Interacts with HRG; the interaction is enhanced at acidic pH, partially inhibits binding of HPSE to cell surface receptors and modulates its enzymatic activity. Interacts with SDC1; the interaction enhances the shedding of SDC1. Interacts with HPSE2. In terms of processing, proteolytically processed. The cleavage of the 65 kDa form leads to the generation of a linker peptide, and the 8 kDa and 50 kDa products. The active form, the 8/50 kDa heterodimer, is resistant to degradation. Complete removal of the linker peptide appears to be a prerequisite to the complete activation of the enzyme. N-glycosylated. Glycosylation of the 50 kDa subunit appears to be essential for its solubility. In terms of tissue distribution, expressed in skin, mainly in the stratum granulosum and the first layer of the stratum corneum in the upper part of the epidermis. Also detected in hair follicles and in sebaceous glands.

The protein localises to the lysosome membrane. Its subcellular location is the secreted. The protein resides in the nucleus. It carries out the reaction endohydrolysis of (1-&gt;4)-beta-D-glycosidic bonds of heparan sulfate chains in heparan sulfate proteoglycan.. Inhibited by EDTA and activated by calcium and magnesium. Inhibited by laminarin sulfate and, to a lower extent, by heparin and sulfamin. Functionally, endoglycosidase that cleaves heparan sulfate proteoglycans (HSPGs) into heparan sulfate side chains and core proteoglycans. Participates in extracellular matrix (ECM) degradation and remodeling. Selectively cleaves the linkage between a glucuronic acid unit and an N-sulfo glucosamine unit carrying either a 3-O-sulfo or a 6-O-sulfo group. Can also cleave the linkage between a glucuronic acid unit and an N-sulfo glucosamine unit carrying a 2-O-sulfo group, but not linkages between a glucuronic acid unit and a 2-O-sulfated iduronic acid moiety. It is essentially inactive at neutral pH but becomes active under acidic conditions such as during tumor invasion and in inflammatory processes. Facilitates cell migration associated with metastasis, wound healing and inflammation. Enhances shedding of syndecans, and increases endothelial invasion and angiogenesis in myelomas. Acts as a procoagulant by increasing the generation of activation factor X in the presence of tissue factor and activation factor VII. Increases cell adhesion to the extracellular matrix (ECM), independent of its enzymatic activity. Induces AKT1/PKB phosphorylation via lipid rafts increasing cell mobility and invasion. Heparin increases this AKT1/PKB activation. Regulates osteogenesis. Enhances angiogenesis through up-regulation of SRC-mediated activation of VEGF. Implicated in hair follicle inner root sheath differentiation and hair homeostasis. In Mus musculus (Mouse), this protein is Heparanase (Hpse).